Consider the following 137-residue polypeptide: Protein apnoia (137 aa).

A run of 3 helical transmembrane segments spans residues 7–27 (IVFA…QQQA), 55–75 (LVPG…LTVV), and 76–96 (SIKG…QMLS).

In terms of assembly, interacts with crb.

It is found in the apical cell membrane. Its function is as follows. Transmembrane protein that plays a key role in trachea development by regulating crb localization and maintenance at the apical cell membrane. Required for anisotropic apical surface expansion important for tracheal tube elongation and lumen stability at larval stages. The chain is Protein apnoia from Drosophila melanogaster (Fruit fly).